Here is a 558-residue protein sequence, read N- to C-terminus: 2-isopropylmalate synthase (558 aa).

The Pyruvate carboxyltransferase domain maps to 30–303 (PIWCSVDLRD…DPELDCRDIE (274 aa)). Aspartate 39, histidine 242, histidine 244, and asparagine 278 together coordinate Mg(2+). The interval 437–558 (QPNARIKFVD…ANRVLEERAK (122 aa)) is regulatory domain.

Belongs to the alpha-IPM synthase/homocitrate synthase family. LeuA type 2 subfamily. Homodimer. Requires Mg(2+) as cofactor.

It is found in the cytoplasm. The catalysed reaction is 3-methyl-2-oxobutanoate + acetyl-CoA + H2O = (2S)-2-isopropylmalate + CoA + H(+). Its pathway is amino-acid biosynthesis; L-leucine biosynthesis; L-leucine from 3-methyl-2-oxobutanoate: step 1/4. Functionally, catalyzes the condensation of the acetyl group of acetyl-CoA with 3-methyl-2-oxobutanoate (2-ketoisovalerate) to form 3-carboxy-3-hydroxy-4-methylpentanoate (2-isopropylmalate). In Agrobacterium fabrum (strain C58 / ATCC 33970) (Agrobacterium tumefaciens (strain C58)), this protein is 2-isopropylmalate synthase.